The chain runs to 338 residues: UDP-glucose 4-epimerase (338 aa).

Residues Tyr-11–Ile-12, Asp-31–Ser-36, Asp-58–Ile-59, Phe-80–Lys-84, Asn-99, Ser-124, Tyr-149, Lys-153, and Phe-178 contribute to the NAD(+) site. Residues Ser-124 and Tyr-149 each contribute to the substrate site. Tyr-149 functions as the Proton acceptor in the catalytic mechanism. Residues Asn-179, Asn-199–Leu-200, Ala-216–Phe-218, Arg-231, Arg-292–Asp-295, and Tyr-299 each bind substrate.

It belongs to the NAD(P)-dependent epimerase/dehydratase family. In terms of assembly, homodimer. NAD(+) is required as a cofactor.

It carries out the reaction UDP-alpha-D-glucose = UDP-alpha-D-galactose. It functions in the pathway carbohydrate metabolism; galactose metabolism. Functionally, involved in the metabolism of galactose. Catalyzes the conversion of UDP-galactose (UDP-Gal) to UDP-glucose (UDP-Glc) through a mechanism involving the transient reduction of NAD. The polypeptide is UDP-glucose 4-epimerase (galE) (Salmonella typhimurium (strain LT2 / SGSC1412 / ATCC 700720)).